The chain runs to 230 residues: Poxin (230 aa).

The active-site Proton donor is H43. Catalysis depends on Y174, which acts as the Shared with catalytic histidine of dimeric partner. Catalysis depends on K178, which acts as the Proton acceptor; shared with catalytic histidine of dimeric partner.

It belongs to the poxin family. In terms of assembly, homodimer.

The enzyme catalyses 2',3'-cGAMP + H2O = Gp(2'-5')Ap(3') + H(+). Nuclease that cleaves host 2',3'-cGAMP. This is Poxin (P26) from Orgyia pseudotsugata multicapsid polyhedrosis virus (OpMNPV).